Consider the following 876-residue polypeptide: Inter-alpha-trypsin inhibitor heavy chain H3 (876 aa).

A signal peptide spans 1–18; that stretch reads MVALSHLGSALQLGSLWG. Positions 19–31 are excised as a propeptide; it reads FPRSPFRLLGKRS. Positions 26 to 155 constitute a VIT domain; sequence LLGKRSLPEG…KVTFELTYEE (130 aa). An N-linked (GlcNAc...) asparagine glycan is attached at N88. The 184-residue stretch at 281-464 folds into the VWFA domain; sequence NVAFVIDISG…LQLQGFYEEV (184 aa). N577 is a glycosylation site (N-linked (GlcNAc...) asparagine). D637 bears the Aspartate 1-(chondroitin 4-sulfate)-ester mark. A propeptide spanning residues 638–876 is cleaved from the precursor; sequence PHFIIQVPEK…HTDYIVPNLF (239 aa).

This sequence belongs to the ITIH family. As to quaternary structure, I-alpha-I plasma protease inhibitors are assembled from one or two heavy chains (HC) and one light chain, bikunin. Pre-alpha-inhibitor (P-alpha-I) is composed of ITIH3/HC3 and bikunin. Heavy chains are linked to bikunin via chondroitin 4-sulfate esterified to the alpha-carboxyl of the C-terminal aspartate after propeptide cleavage.

The protein localises to the secreted. May act as a carrier of hyaluronan in serum or as a binding protein between hyaluronan and other matrix protein, including those on cell surfaces in tissues to regulate the localization, synthesis and degradation of hyaluronan which are essential to cells undergoing biological processes. This chain is Inter-alpha-trypsin inhibitor heavy chain H3 (ITIH3), found in Pongo abelii (Sumatran orangutan).